We begin with the raw amino-acid sequence, 420 residues long: Phosphoribosylamine--glycine ligase (420 aa).

One can recognise an ATP-grasp domain in the interval 108-314; sequence KQFMEKYAIP…FAALIDALLH (207 aa). 134–195 lines the ATP pocket; that stretch reads LDERGVPIVI…EDFLAGEEFS (62 aa). Mg(2+) is bound by residues Glu-284 and Asn-286.

This sequence belongs to the GARS family. The cofactor is Mg(2+). Mn(2+) is required as a cofactor.

It catalyses the reaction 5-phospho-beta-D-ribosylamine + glycine + ATP = N(1)-(5-phospho-beta-D-ribosyl)glycinamide + ADP + phosphate + H(+). It functions in the pathway purine metabolism; IMP biosynthesis via de novo pathway; N(1)-(5-phospho-D-ribosyl)glycinamide from 5-phospho-alpha-D-ribose 1-diphosphate: step 2/2. This Listeria monocytogenes serotype 4b (strain F2365) protein is Phosphoribosylamine--glycine ligase.